A 273-amino-acid chain; its full sequence is Ciliary microtubule inner protein 2B (273 aa).

Disordered stretches follow at residues 59–85 (TLLP…GHER) and 123–164 (RHGE…HASP). Basic and acidic residues predominate over residues 123 to 159 (RHGEQESHQLPDGAKGEREVEEDQLREAEEPPLKQEL).

This sequence belongs to the CIMIP2 family. In terms of assembly, microtubule inner protein component of sperm flagellar doublet microtubules. Expressed in airway epithelial cells.

Its subcellular location is the cytoplasm. The protein localises to the cytoskeleton. It is found in the cilium axoneme. It localises to the flagellum axoneme. Microtubule inner protein (MIP) part of the dynein-decorated doublet microtubules (DMTs) in cilia axoneme, which is required for motile cilia beating. The polypeptide is Ciliary microtubule inner protein 2B (Cimip2b) (Mus musculus (Mouse)).